A 131-amino-acid chain; its full sequence is Lymphocyte antigen 6C1 (131 aa).

An N-terminal signal peptide occupies residues 1 to 26 (MDTSHTTKSCVLILLVALLCAERAQG). A UPAR/Ly6 domain is found at 27-115 (LQCYECYGVP…PTAGSTWTMA (89 aa)). 5 disulfide bridges follow: cysteine 29–cysteine 53, cysteine 32–cysteine 41, cysteine 46–cysteine 74, cysteine 78–cysteine 95, and cysteine 96–cysteine 101. The GPI-anchor amidated glycine moiety is linked to residue glycine 109. The propeptide at 110–131 (STWTMAGVLLFSLSSVVLQTLL) is removed in mature form.

It localises to the cell membrane. In Mus musculus (Mouse), this protein is Lymphocyte antigen 6C1 (Ly6c1).